A 186-amino-acid chain; its full sequence is UPF0301 protein Nmul_A2478 (186 aa).

The protein belongs to the UPF0301 (AlgH) family.

The sequence is that of UPF0301 protein Nmul_A2478 from Nitrosospira multiformis (strain ATCC 25196 / NCIMB 11849 / C 71).